Here is a 142-residue protein sequence, read N- to C-terminus: uncharacterized protein (142 aa).

The Cytoplasmic portion of the chain corresponds to 1–9; the sequence is MDMVSPVLN. A helical transmembrane segment spans residues 10-30; the sequence is LQSSILGELVGIIGKVFFLLI. Topologically, residues 31 to 41 are extracellular; sequence EEIKYPIITPK. The chain crosses the membrane as a helical span at residues 42 to 62; that stretch reads IIVDAQISSWSLFFFASICNL. Topologically, residues 63 to 101 are cytoplasmic; it reads SAKFREPIVTTSSIISLMESEKDLKNVNEYFQIMAKMLF. The chain crosses the membrane as a helical span at residues 102 to 122; the sequence is ILENKIVVSLFVVFNISVLII. Topologically, residues 123–142 are extracellular; that stretch reads VKSEPYSYGKVLFKPSSSIF.

It is found in the membrane. This is an uncharacterized protein from Saccharomyces cerevisiae (strain ATCC 204508 / S288c) (Baker's yeast).